The sequence spans 519 residues: Cobyric acid synthase (519 aa).

Positions 256–438 (WLRVAVPRLP…WHGLFENDAF (183 aa)) constitute a GATase cobBQ-type domain. C337 acts as the Nucleophile in catalysis. H430 is a catalytic residue.

Belongs to the CobB/CobQ family. CobQ subfamily.

It functions in the pathway cofactor biosynthesis; adenosylcobalamin biosynthesis. Its function is as follows. Catalyzes amidations at positions B, D, E, and G on adenosylcobyrinic A,C-diamide. NH(2) groups are provided by glutamine, and one molecule of ATP is hydrogenolyzed for each amidation. In Saccharopolyspora erythraea (strain ATCC 11635 / DSM 40517 / JCM 4748 / NBRC 13426 / NCIMB 8594 / NRRL 2338), this protein is Cobyric acid synthase.